A 118-amino-acid polypeptide reads, in one-letter code: Ribulose bisphosphate carboxylase small subunit 2 (118 aa).

It belongs to the RuBisCO small chain family. In terms of assembly, heterohexadecamer of 8 large and 8 small subunits.

RuBisCO catalyzes two reactions: the carboxylation of D-ribulose 1,5-bisphosphate, the primary event in carbon dioxide fixation, as well as the oxidative fragmentation of the pentose substrate. Both reactions occur simultaneously and in competition at the same active site. Although the small subunit is not catalytic it is essential for maximal activity. The sequence is that of Ribulose bisphosphate carboxylase small subunit 2 from Acidithiobacillus ferrooxidans (Thiobacillus ferrooxidans).